We begin with the raw amino-acid sequence, 732 residues long: Interleukin-31 receptor subunit alpha (732 aa).

Residues 1-19 (MMWTWALWMLPSLCKFSLA) form the signal peptide. Topologically, residues 20-519 (ALPAKPENIS…FKTLSFSVFE (500 aa)) are extracellular. 5 consecutive Fibronectin type-III domains span residues 24-122 (KPEN…IAKT), 124-225 (PPKI…TEEE), 223-315 (EEEA…PVAT), 319-416 (PAIQ…QAYA), and 421-515 (PSEG…TLSF). Asn37, Asn67, Asn93, Asn166, Asn187, Asn277, Asn283, Asn395, Asn455, and Asn504 each carry an N-linked (GlcNAc...) asparagine glycan. Residues 520–540 (IILITSLIGGGLLILIILTVA) traverse the membrane as a helical segment. Residues 541–732 (YGLKKPNKLT…KLPEHTKGEV (192 aa)) are Cytoplasmic-facing.

The protein belongs to the type I cytokine receptor family. Type 2 subfamily. In terms of assembly, heterodimer with OSMR. Interacts with JAK1 and STAT3. In terms of processing, N-glycosylated. In terms of tissue distribution, expressed in CD14- and CD56-positive blood cells. Expressed in macrophages. Expressed in keratinocytes. Expressed in a subset of dorsal root ganglia neurons (at protein level). Expressed at low levels in testis, ovary, brain, prostate, placenta, thymus, bone marrow, trachea and skin. Expressed in bronchial and alveolar epithelial cells and pulmonary fibroblasts. Detected in all of the myelomonocytic lineage. Isoform 6: Expressed at higher levels in lesional skin compared to healthy skin of atopic dermatitis patients.

The protein resides in the cell membrane. It localises to the presynaptic cell membrane. It is found in the cell projection. Its subcellular location is the axon. Associates with OSMR to form the interleukin-31 receptor which activates STAT3 and to a lower extent STAT1 and STAT5. May function in skin immunity. Mediates IL31-induced itch, probably in a manner dependent on cation channels TRPA1 and TRPV1. Positively regulates numbers and cycling status of immature subsets of myeloid progenitor cells in bone marrow in vivo and enhances myeloid progenitor cell survival in vitro. The polypeptide is Interleukin-31 receptor subunit alpha (IL31RA) (Homo sapiens (Human)).